A 123-amino-acid chain; its full sequence is Small ribosomal subunit protein uS12c (123 aa).

This sequence belongs to the universal ribosomal protein uS12 family. As to quaternary structure, part of the 30S ribosomal subunit.

It localises to the plastid. It is found in the chloroplast. With S4 and S5 plays an important role in translational accuracy. Located at the interface of the 30S and 50S subunits. This chain is Small ribosomal subunit protein uS12c (rps12), found in Anthoceros angustus (Hornwort).